Reading from the N-terminus, the 240-residue chain is Tubulin alpha chain (240 aa).

Asn17 is a binding site for GTP. Glu43 is an active-site residue.

Belongs to the tubulin family. As to quaternary structure, dimer of alpha and beta chains. A typical microtubule is a hollow water-filled tube with an outer diameter of 25 nm and an inner diameter of 15 nM. Alpha-beta heterodimers associate head-to-tail to form protofilaments running lengthwise along the microtubule wall with the beta-tubulin subunit facing the microtubule plus end conferring a structural polarity. Microtubules usually have 13 protofilaments but different protofilament numbers can be found in some organisms and specialized cells. The cofactor is Mg(2+). Undergoes a tyrosination/detyrosination cycle, the cyclic removal and re-addition of a C-terminal tyrosine residue by the enzymes tubulin tyrosine carboxypeptidase (TTCP) and tubulin tyrosine ligase (TTL), respectively.

It is found in the cytoplasm. It localises to the cytoskeleton. The enzyme catalyses GTP + H2O = GDP + phosphate + H(+). Tubulin is the major constituent of microtubules, a cylinder consisting of laterally associated linear protofilaments composed of alpha- and beta-tubulin heterodimers. Microtubules grow by the addition of GTP-tubulin dimers to the microtubule end, where a stabilizing cap forms. Below the cap, tubulin dimers are in GDP-bound state, owing to GTPase activity of alpha-tubulin. The protein is Tubulin alpha chain of Octopus vulgaris (Common octopus).